We begin with the raw amino-acid sequence, 470 residues long: Methylenetetrahydrofolate--tRNA-(uracil-5-)-methyltransferase TrmFO (470 aa).

10-15 contacts FAD; the sequence is GAGLAG.

It belongs to the MnmG family. TrmFO subfamily. The cofactor is FAD.

It is found in the cytoplasm. The catalysed reaction is uridine(54) in tRNA + (6R)-5,10-methylene-5,6,7,8-tetrahydrofolate + NADH + H(+) = 5-methyluridine(54) in tRNA + (6S)-5,6,7,8-tetrahydrofolate + NAD(+). It catalyses the reaction uridine(54) in tRNA + (6R)-5,10-methylene-5,6,7,8-tetrahydrofolate + NADPH + H(+) = 5-methyluridine(54) in tRNA + (6S)-5,6,7,8-tetrahydrofolate + NADP(+). Its function is as follows. Catalyzes the folate-dependent formation of 5-methyl-uridine at position 54 (M-5-U54) in all tRNAs. The sequence is that of Methylenetetrahydrofolate--tRNA-(uracil-5-)-methyltransferase TrmFO from Prochlorococcus marinus (strain MIT 9215).